We begin with the raw amino-acid sequence, 322 residues long: 6-deoxy-6-sulfo-D-fructose transketolase subunit SqwH (322 aa).

It belongs to the transketolase family. Forms a complex with SqwG. The cofactor is thiamine diphosphate.

It catalyses the reaction 6-deoxy-6-sulfo-D-fructose + D-glyceraldehyde 3-phosphate = 4-deoxy-4-sulfo-D-erythrose + D-xylulose 5-phosphate. The enzyme catalyses 4-deoxy-4-sulfo-D-erythrulose + D-glyceraldehyde 3-phosphate = sulfoacetaldehyde + D-xylulose 5-phosphate. Functionally, part of the sulfo-TK pathway, a D-sulfoquinovose degradation pathway that produces 2-hydroxyethane-1-sulfonate (isethionate). Catalyzes two steps of the pathway: the formation of 4-deoxy-4-sulfoerythrose (SE) and xylulose 5-phosphate from 6-deoxy-6-sulfo-D-fructose (SF) and glyceraldehyde 3-phosphate, and the formation of sulfoacetaldehyde (SA) and xylulose 5-phosphate from 4-deoxy-4-sulfo-D-erythrulose (SEu) and glyceraldehyde 3-phosphate. The sequence is that of 6-deoxy-6-sulfo-D-fructose transketolase subunit SqwH from Clostridium sp. (strain MSTE9).